The primary structure comprises 101 residues: Small ribosomal subunit protein uS14A (101 aa).

The disordered stretch occupies residues 28-57 (KDIIRSPSSAPEQRSTAQRALARQPRDASP). Residues 33 to 45 (SPSSAPEQRSTAQ) show a composition bias toward polar residues.

The protein belongs to the universal ribosomal protein uS14 family. As to quaternary structure, part of the 30S ribosomal subunit. Contacts proteins S3 and S10.

Binds 16S rRNA, required for the assembly of 30S particles and may also be responsible for determining the conformation of the 16S rRNA at the A site. This Mycobacterium bovis (strain ATCC BAA-935 / AF2122/97) protein is Small ribosomal subunit protein uS14A.